The sequence spans 215 residues: Large ribosomal subunit protein uL3 (215 aa).

Positions 131-144 are enriched in low complexity; that stretch reads SSSRASHGNSRSHN. Positions 131-150 are disordered; it reads SSSRASHGNSRSHNVPGSIG. Q153 carries the N5-methylglutamine modification.

This sequence belongs to the universal ribosomal protein uL3 family. Part of the 50S ribosomal subunit. Forms a cluster with proteins L14 and L19. In terms of processing, methylated by PrmB.

Functionally, one of the primary rRNA binding proteins, it binds directly near the 3'-end of the 23S rRNA, where it nucleates assembly of the 50S subunit. In Nitrosomonas europaea (strain ATCC 19718 / CIP 103999 / KCTC 2705 / NBRC 14298), this protein is Large ribosomal subunit protein uL3.